We begin with the raw amino-acid sequence, 415 residues long: MSAGAGAAVEAGFSSEELLSLRFPLHRACRDGDLVALCSLLPHTPRAHLAAEDSFYGWTPVHWAAHFGKLECLMQLVRAGASLNVSTTRYAQTPAHIAAFGGHPQCLVWLIQAGANINKPDCEGETPIHKAARSGSLECITALVGSGAHTDLRNASGLTAADIAQTQGFQECTQFLLSLQNHQMSRFCHNGTLSGGHESILPTHVSLGTNRKRCLEDSESLGVKKARTRVPSLDHAMPLANGEAEDDADRMHVDRECAAVSDMKNSSSVLNTLTNGSVVNGHLDFPCANQLNGMESRSHPCLTGSNGVSNGQPLSSGQASVSANGTEEPEKTMGINPEMCGSLHLNGSPSSCVASRPSWVGDIGESLHYGHYHGFGDTAESIPELSSVLEHTSCVRVEQRYDSAVLGAMQLHHGS.

4 ANK repeats span residues 20–49 (SLRF…RAHL), 56–85 (YGWT…SLNV), 90–119 (YAQT…NINK), and 123–152 (EGET…HTDL). The segment covering 303 to 325 (TGSNGVSNGQPLSSGQASVSANG) has biased composition (polar residues). Positions 303-330 (TGSNGVSNGQPLSSGQASVSANGTEEPE) are disordered.

The chain is Ankyrin repeat domain-containing protein 10 (Ankrd10) from Mus musculus (Mouse).